The primary structure comprises 137 residues: AVCVSLLGAANIPPHPLNLINFMEMIRYTIPCEKTWGEYADYGCYCGAGGSGRPIDALDRCCYVHDNCYGDAEKKHKCNPKTQSYSYKLTKRTIICYGAAGTCARIVCDCDRTAALCFGDSEYIERHKNIDTARFCQ.

Positions 1–9 (AVCVSLLGA) are cleaved as a signal peptide. Residues 10-17 (ANIPPHPL) constitute a propeptide that is removed on maturation. 6 disulfides stabilise this stretch: Cys-44–Cys-136, Cys-46–Cys-62, Cys-61–Cys-117, Cys-68–Cys-110, Cys-78–Cys-103, and Cys-96–Cys-108. 3 residues coordinate Ca(2+): Tyr-45, Gly-47, and Gly-49. His-65 is a catalytic residue. Asp-66 provides a ligand contact to Ca(2+). The active site involves Asp-111.

The protein belongs to the phospholipase A2 family. Group I subfamily. D49 sub-subfamily. As to quaternary structure, heterodimer; disulfide-linked. The A chain has phospholipase A2 activity and the B chain shows homology with the basic protease inhibitors. The cofactor is Ca(2+). As to expression, expressed by the venom gland.

Its subcellular location is the secreted. The catalysed reaction is a 1,2-diacyl-sn-glycero-3-phosphocholine + H2O = a 1-acyl-sn-glycero-3-phosphocholine + a fatty acid + H(+). Functionally, snake venom phospholipase A2 (PLA2) that shows presynaptic neurotoxicity. The A chain has phospholipase activity. PLA2 catalyzes the calcium-dependent hydrolysis of the 2-acyl groups in 3-sn-phosphoglycerides. This is Basic phospholipase A2 beta-bungarotoxin A1 chain from Bungarus candidus (Malayan krait).